The following is a 90-amino-acid chain: uncharacterized protein (90 aa).

Helical transmembrane passes span 17-37 (ILSM…IYLV) and 55-75 (ICFG…WGIA).

The protein localises to the membrane. This is an uncharacterized protein from Schizosaccharomyces pombe (strain 972 / ATCC 24843) (Fission yeast).